Here is a 299-residue protein sequence, read N- to C-terminus: Pyridoxal 5'-phosphate synthase subunit PdxS (299 aa).

Asp-29 serves as a coordination point for D-ribose 5-phosphate. The active-site Schiff-base intermediate with D-ribose 5-phosphate is Lys-86. Gly-158 lines the D-ribose 5-phosphate pocket. Residue Arg-170 participates in D-glyceraldehyde 3-phosphate binding. Residues Gly-219 and 240–241 each bind D-ribose 5-phosphate; that span reads GS.

This sequence belongs to the PdxS/SNZ family. In the presence of PdxT, forms a dodecamer of heterodimers.

It carries out the reaction aldehydo-D-ribose 5-phosphate + D-glyceraldehyde 3-phosphate + L-glutamine = pyridoxal 5'-phosphate + L-glutamate + phosphate + 3 H2O + H(+). It participates in cofactor biosynthesis; pyridoxal 5'-phosphate biosynthesis. In terms of biological role, catalyzes the formation of pyridoxal 5'-phosphate from ribose 5-phosphate (RBP), glyceraldehyde 3-phosphate (G3P) and ammonia. The ammonia is provided by the PdxT subunit. Can also use ribulose 5-phosphate and dihydroxyacetone phosphate as substrates, resulting from enzyme-catalyzed isomerization of RBP and G3P, respectively. This chain is Pyridoxal 5'-phosphate synthase subunit PdxS, found in Protochlamydia amoebophila (strain UWE25).